A 592-amino-acid chain; its full sequence is MNNGRIVRINGPLVVADNMKNAQMYEVVEVGEPRLIGEITRIEGDRAFIQVYEDTSGIKPNEPVYRTGAPLSIELGPGLIGKIFDGLQRPLDSIKELTKSPFIARGIKVPSVDRKTKWHFIPKVKKGDKIEGGDIIGIVNETPLVEHRILVPPYVHGTLKEIVAEGDYTVEDPIAVVDMNGDEVPIRLMQRWPVRIPRPFREKLEPTEPLLTGTRVLDTIFPIAKGGTAAIPGPFGSGKTVTLQSLAKWSAAKIVIYVGCGERGNEMTDELRQFPSLKDPWTGRPLLERTILVANTSNMPVAAREASIYVGITMAEYFRDQGYDTLLVADSTSRWAEALRDLGGRMEEMPAEEGFPSYLPSRLAEYYERAGRVKTVGKPERFGSVTVASAVSPPGGDFTEPVTSQTLRFVKVFWPLDVSLAQARHYPAINWLQGFSAYVDLVANWWNTNVDPKWREMRDMMVRTLIREDELRQIVRLVGPESLAEKDKLVLETARLIKEAFLKQNAYDDIDAFSSPQKQARVMRLIYLFNTHASRLVERGIPTKKIVDSMGQLLPEIIRSKAAIKNDELNKYDELERKLISVFENLEKEAGT.

233-240 (GPFGSGKT) lines the ATP pocket.

It belongs to the ATPase alpha/beta chains family. As to quaternary structure, has multiple subunits with at least A(3), B(3), C, D, E, F, H, I and proteolipid K(x).

It is found in the cell membrane. The enzyme catalyses ATP + H2O + 4 H(+)(in) = ADP + phosphate + 5 H(+)(out). Component of the A-type ATP synthase that produces ATP from ADP in the presence of a proton gradient across the membrane. The A chain is the catalytic subunit. This is A-type ATP synthase subunit A from Saccharolobus islandicus (strain Y.N.15.51 / Yellowstone #2) (Sulfolobus islandicus).